A 401-amino-acid chain; its full sequence is O-methyltransferase SAT18 (401 aa).

Aspartate 249 provides a ligand contact to S-adenosyl-L-methionine. The active-site Proton acceptor is the histidine 300.

This sequence belongs to the class I-like SAM-binding methyltransferase superfamily. Cation-independent O-methyltransferase family.

It functions in the pathway mycotoxin biosynthesis. In terms of biological role, O-methyltransferase; part of the satratoxin SC3 cluster involved in the biosynthesis of satratoxins, trichothecene mycotoxins that are associated with human food poisonings. Satratoxins are suggested to be made by products of multiple gene clusters (SC1, SC2 and SC3) that encode 21 proteins in all, including polyketide synthases, acetyltransferases, and other enzymes expected to modify the trichothecene skeleton. SC1 encodes 10 proteins, SAT1 to SAT10. The largest are SAT8, which encodes a putative polyketide synthase (PKS) with a conventional non-reducing architecture, and SAT10, a putative protein containing four ankyrin repeats and thus may be involved in protein scaffolding. The putative short-chain reductase SAT3 may assist the PKS in some capacity. SAT6 contains a secretory lipase domain and acts probably as a trichothecene esterase. SAT5 encodes a putative acetyltransferase, and so, with SAT6, may affect endogenous protection from toxicity. The probable transcription factor SAT9 may regulate the expression of the SC1 cluster. SC2 encodes proteins SAT11 to SAT16, the largest of which encodes the putative reducing PKS SAT13. SAT11 is a cytochrome P450 monooxygenase, while SAT14 and SAT16 are probable acetyltransferases. The SC2 cluster may be regulated by the transcription factor SAT15. SC3 is a small cluster that encodes 5 proteins, SAT17 to SAT21. SAT21 is a putative MFS-type transporter which may have a role in exporting secondary metabolites. The four other proteins putatively encoded in SC3 include the taurine hydroxylase-like protein SAT17, the O-methyltransferase SAT18, the acetyltransferase SAT19, and the Cys6-type zinc finger SAT20, the latter being probably involved in regulation of SC3 expression. This chain is O-methyltransferase SAT18, found in Stachybotrys chartarum (strain CBS 109288 / IBT 7711) (Toxic black mold).